A 208-amino-acid polypeptide reads, in one-letter code: Fibroblast growth factor 6 (208 aa).

The signal sequence occupies residues 1–37; the sequence is MALGQRLFITMSRGAGRVQGTLQALVFLGVLVGMVVP. N-linked (GlcNAc...) asparagine glycosylation occurs at asparagine 45. Residues cysteine 90 and cysteine 157 are joined by a disulfide bond.

It belongs to the heparin-binding growth factors family. In terms of assembly, interacts with FGFR1, FGFR2 and FGFR4. Affinity between fibroblast growth factors (FGFs) and their receptors is increased by heparan sulfate glycosaminoglycans that function as coreceptors. In terms of tissue distribution, embryos, adult muscles and adult testis.

It localises to the secreted. The protein localises to the extracellular space. Functionally, plays an important role in the regulation of cell proliferation, cell differentiation, angiogenesis and myogenesis, and is required for normal muscle regeneration. This Mus musculus (Mouse) protein is Fibroblast growth factor 6 (Fgf6).